Here is an 89-residue protein sequence, read N- to C-terminus: HssA/B-like protein DDB_G0295685 (89 aa).

This sequence belongs to the hssA/B family.

The polypeptide is HssA/B-like protein DDB_G0295685 (Dictyostelium discoideum (Social amoeba)).